The sequence spans 542 residues: Prolyl 4-hydroxylase subunit alpha-3 (542 aa).

The signal sequence occupies residues 1-24; sequence MGPGARLALLALLALGGDPAAATG. A coiled-coil region spans residues 105 to 129; sequence LEATENIRALKDGYEKVEQDLPAFE. One copy of the TPR repeat lies at 225–258; it reads EDALDYLAFACFQVGNVSCALSLSREFLVYSPDN. The N-linked (GlcNAc...) asparagine glycan is linked to asparagine 240. The Fe2OG dioxygenase domain maps to 420 to 527; sequence YAEYLQVVNY…KWVANKWIHE (108 aa). Histidine 438 and aspartate 440 together coordinate Fe cation. Asparagine 480 carries an N-linked (GlcNAc...) asparagine glycan. Histidine 508 lines the Fe cation pocket. Lysine 518 lines the 2-oxoglutarate pocket.

This sequence belongs to the P4HA family. As to quaternary structure, heterotetramer of two alpha-3 chains and two beta chains (the beta chain is the multi-functional PDI). The cofactor is Fe(2+). It depends on L-ascorbate as a cofactor. Post-translationally, N-glycosylation plays no role in the catalytic activity.

The protein localises to the endoplasmic reticulum lumen. The enzyme catalyses L-prolyl-[collagen] + 2-oxoglutarate + O2 = trans-4-hydroxy-L-prolyl-[collagen] + succinate + CO2. Catalyzes the post-translational formation of 4-hydroxyproline in -Xaa-Pro-Gly- sequences in collagens and other proteins. The protein is Prolyl 4-hydroxylase subunit alpha-3 (P4ha3) of Mus musculus (Mouse).